The chain runs to 1312 residues: uncharacterized protein (1312 aa).

The first 20 residues, 1-20 (MRNNLIYTMFLSCLHFETFC), serve as a signal peptide directing secretion. Positions 299 to 344 (TTTSSSTMLSSTTLLTTETETRESSSTGSTQTTTPSTEPSTTITTP) are enriched in low complexity. Disordered regions lie at residues 299-503 (TTTS…TTTY), 565-609 (EITS…PTGG), 645-692 (KETR…PTGG), 749-775 (SSSS…PTGG), 812-864 (KTRT…GGTT), 899-942 (KTRT…PTGG), 1048-1079 (KTRT…TGGT), and 1114-1165 (NTTR…TLET). Polar residues predominate over residues 345 to 357 (MEQSSTVSSVQKT). Residues 365–503 (SSSTTVPTSA…STPATPTTTY (139 aa)) are compositionally biased toward low complexity. Residues 565 to 574 (EITSDAEGCK) show a composition bias toward basic and acidic residues. The segment covering 576–609 (TSSTPTPSSTSVHSTTATPSTTPGTTTYNWPTGG) has biased composition (low complexity). Residues 645–659 (KETRTETTTDADGCK) are compositionally biased toward basic and acidic residues. The span at 660–692 (KTSSTSSSTPSLKHSTTPTPTPGTTTYNWPTGG) shows a compositional bias: low complexity. A compositionally biased stretch (basic and acidic residues) spans 813 to 825 (TRTETTTDAEGCK). Over residues 826–864 (KTSSTSKISTTPTSPTSSKPTPTSTSMTTTYNWPTGGTT) the composition is skewed to low complexity. A compositionally biased stretch (polar residues) spans 899-908 (KTRTETTTDA). Low complexity predominate over residues 914-942 (TSSTSLKPTSPSSSTASPPTTTYNWPTGG). Over residues 1048 to 1057 (KTRTETTSDA) the composition is skewed to polar residues. Over residues 1063–1076 (TSTTQTPTTFNWPT) the composition is skewed to low complexity. The segment covering 1114–1123 (NTTRTETTSD) has biased composition (polar residues). The span at 1130 to 1154 (TSSGTTSTMSPGTTGGTTVSRTTNS) shows a compositional bias: low complexity. The segment covering 1155 to 1164 (NNPIDSSTLE) has biased composition (polar residues). The region spanning 1239–1306 (ATCSSLNLNL…WSGTPEKCVA (68 aa)) is the Sushi domain. 2 disulfide bridges follow: Cys-1241–Cys-1291 and Cys-1273–Cys-1304.

Its subcellular location is the secreted. This is an uncharacterized protein from Caenorhabditis elegans.